The sequence spans 105 residues: MRRVRVGDEVIVTAGRSKGKQGKILRILGDERVIVQDVNMVKRHTRPNPTANKPGGIIEREASIHISNVMLYNPATEKGDRIGFRRLEDGRKVRYFKSNDEIIDV.

The protein belongs to the universal ribosomal protein uL24 family. In terms of assembly, part of the 50S ribosomal subunit.

Its function is as follows. One of two assembly initiator proteins, it binds directly to the 5'-end of the 23S rRNA, where it nucleates assembly of the 50S subunit. Functionally, one of the proteins that surrounds the polypeptide exit tunnel on the outside of the subunit. This chain is Large ribosomal subunit protein uL24, found in Nitrosococcus oceani (strain ATCC 19707 / BCRC 17464 / JCM 30415 / NCIMB 11848 / C-107).